Reading from the N-terminus, the 240-residue chain is Ubiquinone biosynthesis O-methyltransferase (240 aa).

Positions 44, 64, 85, and 129 each coordinate S-adenosyl-L-methionine.

Belongs to the methyltransferase superfamily. UbiG/COQ3 family.

The enzyme catalyses a 3-demethylubiquinol + S-adenosyl-L-methionine = a ubiquinol + S-adenosyl-L-homocysteine + H(+). The catalysed reaction is a 3-(all-trans-polyprenyl)benzene-1,2-diol + S-adenosyl-L-methionine = a 2-methoxy-6-(all-trans-polyprenyl)phenol + S-adenosyl-L-homocysteine + H(+). It functions in the pathway cofactor biosynthesis; ubiquinone biosynthesis. In terms of biological role, O-methyltransferase that catalyzes the 2 O-methylation steps in the ubiquinone biosynthetic pathway. In Escherichia coli O9:H4 (strain HS), this protein is Ubiquinone biosynthesis O-methyltransferase.